A 700-amino-acid polypeptide reads, in one-letter code: Calpain-2 catalytic subunit (700 aa).

An N-acetylalanine modification is found at Ala-2. Positions 2-19 are cleaved as a propeptide — anchors to the small subunit; it reads AGIAAKLAKDREAAEGLG. One can recognise a Calpain catalytic domain in the interval 45–344; it reads LFQDPSFPAL…YSRLEICNLT (300 aa). Gly-91 and Asp-96 together coordinate Ca(2+). Cys-105 is an active-site residue. Ca(2+) is bound by residues Glu-175, Gln-229, and Lys-230. Residues His-262 and Asn-286 contribute to the active site. Ca(2+) contacts are provided by Glu-292, Asp-299, and Glu-323. The domain III stretch occupies residues 345 to 514; sequence PDTLTSDSYK…KKADYQVVDD (170 aa). Residues 515 to 529 form a linker region; that stretch reads EIEANIDEIDISEDD. Residues 530-700 are domain IV; the sequence is IDDGFRRLFA…LISWLSFSVL (171 aa). Ca(2+)-binding residues include Ala-542, Asp-545, Glu-547, Glu-552, Asp-585, Asp-587, Ser-589, Lys-591, Glu-596, Asp-615, Asp-617, Ser-619, Thr-621, Glu-626, Asp-658, and Asn-661. 3 EF-hand domains span residues 572 to 597, 602 to 637, and 652 to 672; these read FSIE…LKEF, TKIQ…AGFK, and DDDL…LETL.

The protein belongs to the peptidase C2 family. In terms of assembly, forms a heterodimer with a small (regulatory) subunit (CAPNS1). Interacts with CPEB3; this leads to cleavage of CPEB3. It depends on Ca(2+) as a cofactor. As to expression, ubiquitous.

Its subcellular location is the cytoplasm. The protein localises to the cell membrane. It carries out the reaction Broad endopeptidase specificity.. With respect to regulation, activated by 200-1000 micromolar concentrations of calcium and inhibited by calpastatin. Calcium-regulated non-lysosomal thiol-protease which catalyzes limited proteolysis of substrates involved in cytoskeletal remodeling and signal transduction. Proteolytically cleaves MYOC at 'Arg-226'. Proteolytically cleaves CPEB3 following neuronal stimulation which abolishes CPEB3 translational repressor activity, leading to translation of CPEB3 target mRNAs. The polypeptide is Calpain-2 catalytic subunit (CAPN2) (Bos taurus (Bovine)).